A 126-amino-acid polypeptide reads, in one-letter code: Glycine cleavage system H protein (126 aa).

In terms of domain architecture, Lipoyl-binding spans 23 to 104 (TLTVGITDHA…PYESWLFKIK (82 aa)). An N6-lipoyllysine modification is found at lysine 64.

This sequence belongs to the GcvH family. In terms of assembly, the glycine cleavage system is composed of four proteins: P, T, L and H. (R)-lipoate serves as cofactor.

Functionally, the glycine cleavage system catalyzes the degradation of glycine. The H protein shuttles the methylamine group of glycine from the P protein to the T protein. The protein is Glycine cleavage system H protein of Paraburkholderia xenovorans (strain LB400).